The sequence spans 225 residues: Transcription factor HES-7 (225 aa).

In terms of domain architecture, bHLH spans 12–69 (GPKMLKPLVEKRRRDRINRSLEELRLLLLERTRDQNLRNPKLEKAEILEFAVGYLRER). The Orange domain maps to 92–122 (YLSGFRECLLRLAAFAHDASPAARAQLFSAL). The tract at residues 125–225 (YLRPKPPRPK…PPPAFWRPWP (101 aa)) is disordered. Low complexity predominate over residues 147–158 (LDPAAPALGPAL). Positions 212–225 (APLPPPPAFWRPWP) are enriched in pro residues. Residues 221 to 224 (WRPW) carry the WRPW motif motif.

As to quaternary structure, transcription repression requires formation of a complex with a corepressor protein of the Groucho/TLE family.

The protein resides in the nucleus. Transcriptional repressor. Represses transcription from both N box- and E box-containing promoters. May with HES1, cooperatively regulate somite formation in the presomitic mesoderm (PSM). May function as a segmentation clock, which is essential for coordinated somite segmentation. In Homo sapiens (Human), this protein is Transcription factor HES-7 (HES7).